The primary structure comprises 367 residues: Coiled-coil domain-containing protein 34 (367 aa).

The residue at position 55 (Ser55) is a Phosphoserine. Disordered regions lie at residues 77-105, 191-228, and 310-349; these read FPFG…KVES, QKKN…KAKE, and YNPI…SSLA. A compositionally biased stretch (acidic residues) spans 82-97; it reads DDSEGEDEEALDEDAR. 2 coiled-coil regions span residues 87–108 and 153–280; these read EDEE…SLEG and RLQQ…AKNK. Residues 197 to 228 show a composition bias toward basic and acidic residues; the sequence is ERKEREQKINKEMEEKEAKKREKEHLQEKAKE. Residues 339-349 are compositionally biased toward low complexity; the sequence is ASQPLPSSSLA.

Expressed in testis and sperm.

Its subcellular location is the cell projection. The protein localises to the cilium. It localises to the flagellum. Its function is as follows. Involved in spermatogenesis. Has a probable role in anterograde intraflagellar transport which is essential for the formation of sperm flagella. This is Coiled-coil domain-containing protein 34 (Ccdc34) from Mus musculus (Mouse).